A 491-amino-acid polypeptide reads, in one-letter code: Proline--tRNA ligase (491 aa).

Belongs to the class-II aminoacyl-tRNA synthetase family. ProS type 3 subfamily. In terms of assembly, homodimer.

Its subcellular location is the cytoplasm. It carries out the reaction tRNA(Pro) + L-proline + ATP = L-prolyl-tRNA(Pro) + AMP + diphosphate. Catalyzes the attachment of proline to tRNA(Pro) in a two-step reaction: proline is first activated by ATP to form Pro-AMP and then transferred to the acceptor end of tRNA(Pro). The sequence is that of Proline--tRNA ligase from Amoebophilus asiaticus (strain 5a2).